Here is a 345-residue protein sequence, read N- to C-terminus: Twinfilin (345 aa).

ADF-H domains lie at 4 to 139 and 177 to 312; these read QTGI…KHKR and GISC…DELH. The segment at 320 to 345 is disordered; that stretch reads PAFAKPKGPPNRGAKRLTRPSNEDQV.

This sequence belongs to the actin-binding proteins ADF family. Twinfilin subfamily. In terms of assembly, interacts with G-actin; ADP-actin form.

The protein resides in the cytoplasm. The protein localises to the cytoskeleton. It is found in the cell cortex. Functionally, actin-binding protein involved in motile and morphological processes. Inhibits actin polymerization, likely by sequestering G-actin. The protein is Twinfilin (twf) of Drosophila pseudoobscura pseudoobscura (Fruit fly).